Reading from the N-terminus, the 647-residue chain is MITVPWSVFLIWTKIGLLLDMAPYSVAAKPCPSVCRCDVGFIYCNDRDLTSIPTGIPEDATNLFLQNNQINNAGIPSELKNLRRVERIFLYHNSLDEFPTNLPKYVKELHLQENNIRTITYDSLSQIPYLEELHLDDNSVSAVSIEDGAFRDNIYLRLLFLSRNHLSTIPWGLPKTIEELRLDDNRISTISELSLQDLTNLKRLVLDGNLLNNHGLGDKVFMNLVNLTELSLVRNSLTAAPVNLPGTNLRKLYLQENHINHVPPNAFSYLRQLYRLDMSNNNLSNLPQGVFDDLDNITQLFLRNNPWHCGCKMKWVRDWLQSLPLKVNVRGLMCQAPEKVRGMAIKDLNAELFDCKDDMSTIQITTAVPNTLYPAQGHWPVSVTKQPDIKTPNLNKNYRTTASPVRKIITIFVKSVSTETIHISWKVALPMTALRLSWLKMGHSPAFGSITETIVTGDRSDYLLTALEPESPYRVCMVPMETSNIYLSDETPECIETETAPLKMYNPTTTLNREQEKEPYKNSSVPLAAIIGGAVALVALALLALVCWYVHRNGALFSRHCAYSKGRRRKDDYAEAGTKKDNSILEIRETSFQMIPITNDQVSKEEFVIHTIFPPNGMNLYKNSHSESSSNRSYRDSGIPDSDHSHS.

The first 28 residues, 1 to 28 (MITVPWSVFLIWTKIGLLLDMAPYSVAA), serve as a signal peptide directing secretion. The Extracellular segment spans residues 29–526 (KPCPSVCRCD…KEPYKNSSVP (498 aa)). Residues 30-62 (PCPSVCRCDVGFIYCNDRDLTSIPTGIPEDATN) enclose the LRRNT domain. 2 cysteine pairs are disulfide-bonded: Cys31/Cys37 and Cys35/Cys44. 10 LRR repeats span residues 58–82 (EDAT…LKNL), 83–105 (RRVE…LPKY), 107–126 (KELH…SLSQ), 127–152 (IPYL…AFRD), 154–179 (IYLR…TIEE), 181–197 (RLDD…SLQD), 198–223 (LTNL…VFMN), 225–246 (VNLT…NLPG), 247–269 (TNLR…AFSY), and 270–293 (LRQL…VFDD). Asn226 carries an N-linked (GlcNAc...) asparagine glycan. One can recognise an LRRCT domain in the interval 305-356 (NPWHCGCKMKWVRDWLQSLPLKVNVRGLMCQAPEKVRGMAIKDLNAELFDCK). The cysteines at positions 309 and 334 are disulfide-linked. A Fibronectin type-III domain is found at 404–502 (PVRKIITIFV…ECIETETAPL (99 aa)). The helical transmembrane segment at 527-547 (LAAIIGGAVALVALALLALVC) threads the bilayer. Over 548–647 (WYVHRNGALF…GIPDSDHSHS (100 aa)) the chain is Cytoplasmic. The interval 620–647 (LYKNSHSESSSNRSYRDSGIPDSDHSHS) is disordered.

Post-translationally, N-glycosylated. Proteolytic cleavage in the juxtamembrane region gives rise to a soluble ectodomain. Cleavage is probably effected by a metalloprotease.

Its subcellular location is the cell membrane. The protein localises to the endoplasmic reticulum membrane. It is found in the cell junction. The protein resides in the focal adhesion. It localises to the secreted. Its subcellular location is the cell projection. The protein localises to the axon. It is found in the growth cone membrane. Modulates the structure and function of the apical ectodermal ridge (AER) that controls embryonic limb development. Functions in cell-cell adhesion, cell migration and axon guidance, exerting an attractive or repulsive role depending on its interaction partners. Plays a role in the spatial organization of brain neurons. Plays a role in vascular development. Plays a role in cell-cell adhesion via its interaction with latrophilins that are expressed at the surface of adjacent cells. Mediates axon attraction towards cells expressing NTN1. Mediates axon growth cone collapse and plays a repulsive role in neuron guidance via its interaction with UNC-5 family members. Plays a role in the regulation of the density of glutamaergic synapses. Plays a role in fibroblast growth factor-mediated signaling cascades. Required for normal morphogenesis during embryonic development, but not for normal embryonic patterning. The protein is Leucine-rich repeat transmembrane protein FLRT3 (FLRT3) of Gallus gallus (Chicken).